The primary structure comprises 374 residues: C-C chemokine receptor type 2 (374 aa).

The Extracellular portion of the chain corresponds to 1 to 42 (MLSTSRSRFIRNTNESGEEVTTFFDYDYGAPCHKFDVKQIGA). N-linked (GlcNAc...) asparagine glycosylation is present at N14. Y26 carries the sulfotyrosine modification. A helical transmembrane segment spans residues 43 to 70 (QLLPPLYSLVFIFGFVGNMLVVLILINC). The Cytoplasmic portion of the chain corresponds to 71–80 (KKLKCLTDIY). A helical transmembrane segment spans residues 81–100 (LLNLAISDLLFLITLPLWAH). Over 101–114 (SAANEWVFGNAMCK) the chain is Extracellular. C113 and C190 are joined by a disulfide. The helical transmembrane segment at 115 to 136 (LFTGLYHIGYFGGIFFIILLTI) threads the bilayer. At 137-153 (DRYLAIVHAVFALKART) the chain is on the cytoplasmic side. Residue Y139 is modified to Phosphotyrosine; by JAK2. The helical transmembrane segment at 154 to 178 (VTFGVVTSVITWLVAVFASVPGIIF) threads the bilayer. At 179 to 206 (TKCQKEDSVYVCGPYFPRGWNNFHTIMR) the chain is on the extracellular side. A helical transmembrane segment spans residues 207–226 (NILGLVLPLLIMVICYSGIL). The Cytoplasmic segment spans residues 227–243 (KTLLRCRNEKKRHRAVR). Residues 244 to 268 (VIFTIMIVYFLFWTPYNIVILLNTF) traverse the membrane as a helical segment. The Extracellular segment spans residues 269–285 (QEFFGLSNCESTSQLDQ). A helical transmembrane segment spans residues 286 to 309 (ATQVTETLGMTHCCINPIIYAFVG). Residues 310 to 374 (EKFRSLFHIA…EASLQDKEGA (65 aa)) are Cytoplasmic-facing. A disordered region spans residues 348-374 (QGLLDGRGKGKSIGRAPEASLQDKEGA).

The protein belongs to the G-protein coupled receptor 1 family. Interacts with ARRB1. Interacts (via extracellular N-terminal region) with beta-defensin DEFB106A/DEFB106B; this interaction may preferentially require specific tyrosine sulfation on CCR2. Interacts with NUP85; the interaction is required for CCR2 clusters formation on the cell membrane and CCR2 signaling. In terms of assembly, (Microbial infection) Binds to HIV-1 Tat. Post-translationally, N-glycosylated. In terms of processing, sulfation increases the affinity for both monomeric and dimeric CCL2 with stronger binding to the monomeric form. Binding of sulfated CCR2 to CCL2 promotes conversion of CCL2 from dimer to monomer. Expressed by monocytes and IL2-activated NK cells. Abundantly expressed on CD14+/CD16- monocytes and weakly on CD14+/CD16+ monocytes, type 2 dendritic cells (DCs) and plasmacytoid DCs (at protein level).

The protein resides in the cell membrane. In terms of biological role, key functional receptor for CCL2 but can also bind CCL7, and CCL12. Also transduces signaling mediated by CCL13. Its binding with CCL2 on monocytes and macrophages mediates chemotaxis and migration induction through the activation of the PI3K cascade, the small G protein Rac and lamellipodium protrusion. Also acts as a receptor for the beta-defensin DEFB106A/DEFB106B. Regulates the expression of T-cell inflammatory cytokines and T-cell differentiation, promoting the differentiation of T-cells into T-helper 17 cells (Th17) during inflammation. Facilitates the export of mature thymocytes by enhancing directional movement of thymocytes to sphingosine-1-phosphate stimulation and up-regulation of S1P1R expression; signals through the JAK-STAT pathway to regulate FOXO1 activity leading to an increased expression of S1P1R. Plays an important role in mediating peripheral nerve injury-induced neuropathic pain. Increases NMDA-mediated synaptic transmission in both dopamine D1 and D2 receptor-containing neurons, which may be caused by MAPK/ERK-dependent phosphorylation of GRIN2B/NMDAR2B. Mediates the recruitment of macrophages and monocytes to the injury site following brain injury. (Microbial infection) Alternative coreceptor with CD4 for HIV-1 infection. The protein is C-C chemokine receptor type 2 (CCR2) of Homo sapiens (Human).